The sequence spans 92 residues: Small ribosomal subunit protein uS19c (92 aa).

It belongs to the universal ribosomal protein uS19 family.

It localises to the plastid. It is found in the chloroplast. Functionally, protein S19 forms a complex with S13 that binds strongly to the 16S ribosomal RNA. The protein is Small ribosomal subunit protein uS19c of Draba nemorosa (Woodland whitlowgrass).